Consider the following 262-residue polypeptide: Phosphate import ATP-binding protein PstB (262 aa).

The 243-residue stretch at 15–257 (AKASNLNLWY…PQKSKTEQYI (243 aa)) folds into the ABC transporter domain. 47-54 (GPSGCGKS) serves as a coordination point for ATP.

The protein belongs to the ABC transporter superfamily. Phosphate importer (TC 3.A.1.7) family. In terms of assembly, the complex is composed of two ATP-binding proteins (PstB), two transmembrane proteins (PstC and PstA) and a solute-binding protein (PstS).

It is found in the cell inner membrane. The catalysed reaction is phosphate(out) + ATP + H2O = ADP + 2 phosphate(in) + H(+). Part of the ABC transporter complex PstSACB involved in phosphate import. Responsible for energy coupling to the transport system. This chain is Phosphate import ATP-binding protein PstB, found in Wolinella succinogenes (strain ATCC 29543 / DSM 1740 / CCUG 13145 / JCM 31913 / LMG 7466 / NCTC 11488 / FDC 602W) (Vibrio succinogenes).